Consider the following 172-residue polypeptide: Type IV secretion system putative outer membrane lipoprotein BMEII0036 (172 aa).

Positions methionine 1–alanine 15 are cleaved as a signal peptide. Cysteine 16 carries the N-palmitoyl cysteine lipid modification. Cysteine 16 carries the S-diacylglycerol cysteine lipid modification. In terms of domain architecture, OmpA-like spans tryptophan 58–lysine 172.

The protein localises to the cell outer membrane. In Brucella melitensis biotype 1 (strain ATCC 23456 / CCUG 17765 / NCTC 10094 / 16M), this protein is Type IV secretion system putative outer membrane lipoprotein BMEII0036.